The chain runs to 133 residues: Ribosome-binding factor A (133 aa).

It belongs to the RbfA family. In terms of assembly, monomer. Binds 30S ribosomal subunits, but not 50S ribosomal subunits or 70S ribosomes.

Its subcellular location is the cytoplasm. Functionally, one of several proteins that assist in the late maturation steps of the functional core of the 30S ribosomal subunit. Associates with free 30S ribosomal subunits (but not with 30S subunits that are part of 70S ribosomes or polysomes). Required for efficient processing of 16S rRNA. May interact with the 5'-terminal helix region of 16S rRNA. The chain is Ribosome-binding factor A from Cytophaga hutchinsonii (strain ATCC 33406 / DSM 1761 / CIP 103989 / NBRC 15051 / NCIMB 9469 / D465).